The following is a 90-amino-acid chain: Small ribosomal subunit protein bS16 (90 aa).

It belongs to the bacterial ribosomal protein bS16 family.

This Streptococcus sanguinis (strain SK36) protein is Small ribosomal subunit protein bS16.